A 226-amino-acid chain; its full sequence is MKPKAITVLSGGLDSTVATSIYANDYDITAITFNYGQQSIKQELKHAKMICEKLDMKHIVIDLPWLKEISNSSLTTDKSIPQPSDNDLDDYDKSIETAKSVWVPARNTVFCSIALSYAESIQAKIIIVGWDYEEAVTFPDNSKEYLKSFNETIKYGSFDDIEIKAPLIDMTKEDIVKKGHEVNAPMNISYSCYVGCDTHCGVCESCKRRKRAFTRANVTDYTEYEK.

Residue 9 to 19 (LSGGLDSTVAT) participates in ATP binding. Residues Cys-192, Cys-200, Cys-203, and Cys-206 each coordinate Zn(2+).

The protein belongs to the QueC family. It depends on Zn(2+) as a cofactor.

The enzyme catalyses 7-carboxy-7-deazaguanine + NH4(+) + ATP = 7-cyano-7-deazaguanine + ADP + phosphate + H2O + H(+). The protein operates within purine metabolism; 7-cyano-7-deazaguanine biosynthesis. Its function is as follows. Catalyzes the ATP-dependent conversion of 7-carboxy-7-deazaguanine (CDG) to 7-cyano-7-deazaguanine (preQ(0)). This is 7-cyano-7-deazaguanine synthase from Methanosphaera stadtmanae (strain ATCC 43021 / DSM 3091 / JCM 11832 / MCB-3).